The chain runs to 331 residues: Olfactory receptor 10S1 (331 aa).

The Extracellular segment spans residues 1-38 (MTSRSVCEKMTMTTENPNQTVVSHFFLEGLRYTAKHSS). An N-linked (GlcNAc...) asparagine glycan is attached at Asn18. The helical transmembrane segment at 39 to 59 (LFFLLFLLIYSITVAGNLLIL) threads the bilayer. Residues 60–67 (LTVGSDSH) lie on the Cytoplasmic side of the membrane. The helical transmembrane segment at 68–88 (LSLPMYHFLGHLSFLDACLST) threads the bilayer. Residues 89-113 (VTVPKVMAGLLTLDGKVISFEGCAV) lie on the Extracellular side of the membrane. A disulfide bond links Cys111 and Cys203. Residues 114–134 (QLYCFHFLASTECFLYTVMAY) form a helical membrane-spanning segment. Over 135 to 153 (DRYLAICQPLHYPVAMNRR) the chain is Cytoplasmic. Residues 154–174 (MCAEMAGITWAIGATHAAIHT) traverse the membrane as a helical segment. The Extracellular portion of the chain corresponds to 175-211 (SLTFRLLYCGPCHIAYFFCDIPPVLKLACTDTTINEL). The helical transmembrane segment at 212–231 (VMLASIGIVAAGCLILIVIS) threads the bilayer. The Cytoplasmic portion of the chain corresponds to 232-251 (YIFIVAAVLRIRTAQGRQRA). Residues 252-272 (FSPCTAQLTGVLLYYVPPVCI) traverse the membrane as a helical segment. Residues 273-283 (YLQPRSSEAGA) lie on the Extracellular side of the membrane. A helical membrane pass occupies residues 284–304 (GAPAVFYTIVTPMLNPFIYTL). The Cytoplasmic portion of the chain corresponds to 305-331 (RNKEVKHALQRLLCSSFRESTAGSPPP).

Belongs to the G-protein coupled receptor 1 family.

It localises to the cell membrane. Odorant receptor. The sequence is that of Olfactory receptor 10S1 (OR10S1) from Homo sapiens (Human).